Reading from the N-terminus, the 145-residue chain is Large ribosomal subunit protein uL13 (145 aa).

Belongs to the universal ribosomal protein uL13 family. As to quaternary structure, part of the 50S ribosomal subunit.

Functionally, this protein is one of the early assembly proteins of the 50S ribosomal subunit, although it is not seen to bind rRNA by itself. It is important during the early stages of 50S assembly. The sequence is that of Large ribosomal subunit protein uL13 from Staphylococcus epidermidis (strain ATCC 35984 / DSM 28319 / BCRC 17069 / CCUG 31568 / BM 3577 / RP62A).